We begin with the raw amino-acid sequence, 171 residues long: Xanthine-guanine phosphoribosyltransferase (171 aa).

5-phospho-alpha-D-ribose 1-diphosphate is bound by residues arginine 51–glycine 52 and aspartate 106–threonine 114. Residue aspartate 107 participates in Mg(2+) binding. Guanine is bound by residues aspartate 110 and isoleucine 153. Residues aspartate 110 and isoleucine 153 each coordinate xanthine. GMP contacts are provided by residues aspartate 110–threonine 114 and tryptophan 152–isoleucine 153.

It belongs to the purine/pyrimidine phosphoribosyltransferase family. XGPT subfamily. As to quaternary structure, homotetramer. It depends on Mg(2+) as a cofactor.

The protein localises to the cell inner membrane. It catalyses the reaction GMP + diphosphate = guanine + 5-phospho-alpha-D-ribose 1-diphosphate. The enzyme catalyses XMP + diphosphate = xanthine + 5-phospho-alpha-D-ribose 1-diphosphate. The catalysed reaction is IMP + diphosphate = hypoxanthine + 5-phospho-alpha-D-ribose 1-diphosphate. It participates in purine metabolism; GMP biosynthesis via salvage pathway; GMP from guanine: step 1/1. It functions in the pathway purine metabolism; XMP biosynthesis via salvage pathway; XMP from xanthine: step 1/1. Its function is as follows. Purine salvage pathway enzyme that catalyzes the transfer of the ribosyl-5-phosphate group from 5-phospho-alpha-D-ribose 1-diphosphate (PRPP) to the N9 position of the 6-oxopurines guanine and xanthine to form the corresponding ribonucleotides GMP (guanosine 5'-monophosphate) and XMP (xanthosine 5'-monophosphate), with the release of PPi. To a lesser extent, also acts on hypoxanthine. This is Xanthine-guanine phosphoribosyltransferase from Ruegeria pomeroyi (strain ATCC 700808 / DSM 15171 / DSS-3) (Silicibacter pomeroyi).